A 1380-amino-acid chain; its full sequence is DNA-directed RNA polymerase subunit beta (1380 aa).

This sequence belongs to the RNA polymerase beta chain family. In terms of assembly, the RNAP catalytic core consists of 2 alpha, 1 beta, 1 beta' and 1 omega subunit. When a sigma factor is associated with the core the holoenzyme is formed, which can initiate transcription.

The catalysed reaction is RNA(n) + a ribonucleoside 5'-triphosphate = RNA(n+1) + diphosphate. In terms of biological role, DNA-dependent RNA polymerase catalyzes the transcription of DNA into RNA using the four ribonucleoside triphosphates as substrates. The polypeptide is DNA-directed RNA polymerase subunit beta (Ehrlichia ruminantium (strain Welgevonden)).